The sequence spans 409 residues: LL-diaminopimelate aminotransferase (409 aa).

Substrate is bound by residues Y15 and G42. Residues Y72, 108 to 109 (AK), Y132, N186, Y217, and 245 to 247 (SFS) each bind pyridoxal 5'-phosphate. K109, Y132, and N186 together coordinate substrate. At K248 the chain carries N6-(pyridoxal phosphate)lysine. Pyridoxal 5'-phosphate-binding residues include R256 and N291. Substrate contacts are provided by N291 and R387.

This sequence belongs to the class-I pyridoxal-phosphate-dependent aminotransferase family. LL-diaminopimelate aminotransferase subfamily. Homodimer. Pyridoxal 5'-phosphate serves as cofactor.

The catalysed reaction is (2S,6S)-2,6-diaminopimelate + 2-oxoglutarate = (S)-2,3,4,5-tetrahydrodipicolinate + L-glutamate + H2O + H(+). Its pathway is amino-acid biosynthesis; L-lysine biosynthesis via DAP pathway; LL-2,6-diaminopimelate from (S)-tetrahydrodipicolinate (aminotransferase route): step 1/1. Involved in the synthesis of meso-diaminopimelate (m-DAP or DL-DAP), required for both lysine and peptidoglycan biosynthesis. Catalyzes the direct conversion of tetrahydrodipicolinate to LL-diaminopimelate. The polypeptide is LL-diaminopimelate aminotransferase (Parabacteroides distasonis (strain ATCC 8503 / DSM 20701 / CIP 104284 / JCM 5825 / NCTC 11152)).